The chain runs to 166 residues: MCNKLFAGRRGYFLGFVASFGLVGLALFLQQKYNLEPCPLCISQRIAFMALGILFLLAALHNPGRVGRKVYGLLHVIAAATGIGIAARHIWIQANPDKVMAECGAGFDYIMETFPLKKALDLIFKGTGECSAIDWTLFGLTIPQLSLIAFVGLGLFAVLLAFHKKA.

The Cytoplasmic portion of the chain corresponds to 1–11 (MCNKLFAGRRG). Residues 12–28 (YFLGFVASFGLVGLALF) traverse the membrane as a helical segment. The Periplasmic portion of the chain corresponds to 29–46 (LQQKYNLEPCPLCISQRI). Cysteine 38 and cysteine 41 are oxidised to a cystine. Residues 47–63 (AFMALGILFLLAALHNP) traverse the membrane as a helical segment. The Cytoplasmic segment spans residues 64-69 (GRVGRK). The helical transmembrane segment at 70 to 87 (VYGLLHVIAAATGIGIAA) threads the bilayer. Over 88–144 (RHIWIQANPDKVMAECGAGFDYIMETFPLKKALDLIFKGTGECSAIDWTLFGLTIPQ) the chain is Periplasmic. A disulfide bridge connects residues cysteine 103 and cysteine 130. A helical transmembrane segment spans residues 145–163 (LSLIAFVGLGLFAVLLAFH). Over 164 to 166 (KKA) the chain is Cytoplasmic.

It belongs to the DsbB family.

The protein resides in the cell inner membrane. In terms of biological role, required for disulfide bond formation in some periplasmic proteins. Acts by oxidizing the DsbA protein. The polypeptide is Disulfide bond formation protein B (Methylobacillus flagellatus (strain ATCC 51484 / DSM 6875 / VKM B-1610 / KT)).